We begin with the raw amino-acid sequence, 250 residues long: 4-hydroxy-tetrahydrodipicolinate reductase (250 aa).

Residues 9-14 (GATGKM), 79-81 (GTT), and 103-106 (SANM) contribute to the NAD(+) site. The Proton donor/acceptor role is filled by His135. His136 contributes to the (S)-2,3,4,5-tetrahydrodipicolinate binding site. The active-site Proton donor is the Lys139. Position 145-146 (145-146 (GT)) interacts with (S)-2,3,4,5-tetrahydrodipicolinate.

It belongs to the DapB family.

The protein localises to the cytoplasm. It carries out the reaction (S)-2,3,4,5-tetrahydrodipicolinate + NAD(+) + H2O = (2S,4S)-4-hydroxy-2,3,4,5-tetrahydrodipicolinate + NADH + H(+). The catalysed reaction is (S)-2,3,4,5-tetrahydrodipicolinate + NADP(+) + H2O = (2S,4S)-4-hydroxy-2,3,4,5-tetrahydrodipicolinate + NADPH + H(+). It functions in the pathway amino-acid biosynthesis; L-lysine biosynthesis via DAP pathway; (S)-tetrahydrodipicolinate from L-aspartate: step 4/4. Functionally, catalyzes the conversion of 4-hydroxy-tetrahydrodipicolinate (HTPA) to tetrahydrodipicolinate. In Rickettsia bellii (strain OSU 85-389), this protein is 4-hydroxy-tetrahydrodipicolinate reductase.